The primary structure comprises 71 residues: Large ribosomal subunit protein bL31 (71 aa).

4 residues coordinate Zn(2+): C16, C18, C37, and C40.

It belongs to the bacterial ribosomal protein bL31 family. Type A subfamily. In terms of assembly, part of the 50S ribosomal subunit. Zn(2+) serves as cofactor.

Its function is as follows. Binds the 23S rRNA. The sequence is that of Large ribosomal subunit protein bL31 from Pectobacterium atrosepticum (strain SCRI 1043 / ATCC BAA-672) (Erwinia carotovora subsp. atroseptica).